The following is a 263-amino-acid chain: Ubiquitin domain-containing protein 7SL RNA2 (263 aa).

One can recognise a Ubiquitin-like 1 domain in the interval 1–53 (MNVDIDTETGSSFSITIDFGETVLQIKEKIEKSQGIPVSKQILYLDGKALEDD). The tract at residues 74–93 (ADPNQSNEQTEQSKQIDDKK) is disordered. Polar residues predominate over residues 76 to 86 (PNQSNEQTEQS). Positions 184–263 (FTVHVKPYQE…GDTIELIREK (80 aa)) constitute a Ubiquitin-like 2 domain.

Belongs to the ubiquitin family. As to expression, expressed in seedlings, roots, stems, rosettes and flowers (at protein level).

The protein localises to the nucleus. Its function is as follows. Controls phase transition from the vegetative to the reproductive state. Involved in the maintenance of the shoot apical meristem (SAM) thus preventing inflorescence meristem (IM) formation and subsequent inflorescence stem development during flowering. Regulates leaf and organ morphology. The chain is Ubiquitin domain-containing protein 7SL RNA2 from Arabidopsis thaliana (Mouse-ear cress).